The chain runs to 424 residues: MSWPTDSELNSIKEAVAQMSGRDKGEVRVVVAPYRICPLGAHIDHQGGTVSAMTINKGILLGFVPSGDTQVQLRSAQFEGEVCFRVDEIQHPIGLANKNGASTPSPSKEKSIWGTYARGAVYALQSSKKNLKQGIIGYLSGSNGLDSSGLSSSAAVGVAYLLALENANELTVSPTENIEYDRLIENGYLGLRNGILDQSAILLSNYGCLTYMDCKTLDHELVQAPELEKPFRILLAFSGLRQALTTNPGYNLRVSECQEAAKVLLTASGNSELEPTLCNVEHAVYEAHKHELKPVLAKRAEHYFSENMRVIKGREAWASGNLEEFGKLISASGLSSIENYECGAEPLIQLYKILLKAPGVYGARFSGAGFRGCCLAFVDAEKAEAAASYVKDEYEKAQPEFANNLNGGKPVLICEAGDAARVLL.

Position 2 is an N-acetylserine (Ser2). 146-155 (DSSGLSSSAA) lines the ATP pocket. Asp197 serves as the catalytic Proton acceptor.

It belongs to the GHMP kinase family. The cofactor is Mg(2+). Mn(2+) is required as a cofactor. Ca(2+) serves as cofactor. As to expression, expressed in roots, stems, leaves, flowers and young siliques. Higher expression in the elongating middle stem region than in the lower or upper stem region.

It catalyses the reaction D-galacturonate + ATP = 1-phospho-alpha-D-galacturonate + ADP + H(+). Inhibited by EDTA and ADP. Sugar-1-kinase with a strict substrate specificity for the alpha-anomeric configuration of D-galacturonic acid (D-GalA) and ATP. Involved in the biosynthesis of UDP-galacturonic acid (UDP-GalA) from the salvaged GalA that is released during growth-dependent cell wall restructuring. This Arabidopsis thaliana (Mouse-ear cress) protein is Galacturonokinase (GALAK).